We begin with the raw amino-acid sequence, 165 residues long: Endoribonuclease YbeY (165 aa).

3 residues coordinate Zn(2+): histidine 130, histidine 134, and histidine 140.

The protein belongs to the endoribonuclease YbeY family. The cofactor is Zn(2+).

It is found in the cytoplasm. Functionally, single strand-specific metallo-endoribonuclease involved in late-stage 70S ribosome quality control and in maturation of the 3' terminus of the 16S rRNA. The protein is Endoribonuclease YbeY of Streptococcus pneumoniae serotype 2 (strain D39 / NCTC 7466).